The primary structure comprises 238 residues: Thiamine import ATP-binding protein ThiQ (238 aa).

Positions 1–234 constitute an ABC transporter domain; sequence MSSTALAVKG…RDIAAINRFL (234 aa). 36–43 is a binding site for ATP; that stretch reads GASGSGKS.

Belongs to the ABC transporter superfamily. Thiamine importer (TC 3.A.1.19.1) family. As to quaternary structure, the complex is composed of two ATP-binding proteins (ThiQ), two transmembrane proteins (ThiP) and a solute-binding protein (ThiB).

Its subcellular location is the cell inner membrane. It catalyses the reaction thiamine(out) + ATP + H2O = thiamine(in) + ADP + phosphate + H(+). In terms of biological role, part of the ABC transporter complex ThiBPQ involved in thiamine import. Responsible for energy coupling to the transport system. The polypeptide is Thiamine import ATP-binding protein ThiQ (Rhizobium meliloti (strain 1021) (Ensifer meliloti)).